The primary structure comprises 420 residues: Probable acetate kinase (420 aa).

Mg(2+) is bound at residue N10. K17 lines the ATP pocket. R97 is a binding site for substrate. Catalysis depends on D153, which acts as the Proton donor/acceptor. Position 213–217 (213–217) interacts with ATP; it reads HIGSG. E403 provides a ligand contact to Mg(2+).

Belongs to the acetokinase family. Mg(2+) is required as a cofactor.

It carries out the reaction acetate + ATP = acetyl phosphate + ADP. Its pathway is metabolic intermediate biosynthesis; acetyl-CoA biosynthesis; acetyl-CoA from acetate: step 1/2. This is Probable acetate kinase from Emericella nidulans (strain FGSC A4 / ATCC 38163 / CBS 112.46 / NRRL 194 / M139) (Aspergillus nidulans).